A 51-amino-acid chain; its full sequence is Bacteriocin aureocin A53 (51 aa).

The residue at position 1 (Met-1) is an N-formylmethionine.

The protein localises to the secreted. Functionally, antibacterial peptide active against a broad range of lactic acid bacteria, L.monocytogenes and many epidemiologically unrelated strains of S.aureus involved in bovine mastitis. The chain is Bacteriocin aureocin A53 (aucA) from Staphylococcus aureus.